Consider the following 239-residue polypeptide: 1-(5-phosphoribosyl)-5-[(5-phosphoribosylamino)methylideneamino] imidazole-4-carboxamide isomerase (239 aa).

Residue Asp8 is the Proton acceptor of the active site. Asp130 (proton donor) is an active-site residue.

Belongs to the HisA/HisF family.

It is found in the cytoplasm. It carries out the reaction 1-(5-phospho-beta-D-ribosyl)-5-[(5-phospho-beta-D-ribosylamino)methylideneamino]imidazole-4-carboxamide = 5-[(5-phospho-1-deoxy-D-ribulos-1-ylimino)methylamino]-1-(5-phospho-beta-D-ribosyl)imidazole-4-carboxamide. Its pathway is amino-acid biosynthesis; L-histidine biosynthesis; L-histidine from 5-phospho-alpha-D-ribose 1-diphosphate: step 4/9. The protein is 1-(5-phosphoribosyl)-5-[(5-phosphoribosylamino)methylideneamino] imidazole-4-carboxamide isomerase of Streptococcus thermophilus (strain ATCC BAA-491 / LMD-9).